The sequence spans 556 residues: Formate--tetrahydrofolate ligase (556 aa).

Residue 65-72 (TPAGEGKT) participates in ATP binding.

Belongs to the formate--tetrahydrofolate ligase family.

The catalysed reaction is (6S)-5,6,7,8-tetrahydrofolate + formate + ATP = (6R)-10-formyltetrahydrofolate + ADP + phosphate. Its pathway is one-carbon metabolism; tetrahydrofolate interconversion. The protein is Formate--tetrahydrofolate ligase of Ruminiclostridium cellulolyticum (strain ATCC 35319 / DSM 5812 / JCM 6584 / H10) (Clostridium cellulolyticum).